A 219-amino-acid polypeptide reads, in one-letter code: Factor in the germline alpha (219 aa).

A bHLH domain is found at 65–117 (ERRRVANAKERERIKNLNRGFARLKALVPFLPQSRKPSKVDILKGATEYIQVL). The disordered stretch occupies residues 124 to 151 (AKDSKKQDPDEQSYSNNSSESHTSSARQ). Residues 136 to 148 (SYSNNSSESHTSS) show a composition bias toward low complexity.

Heterodimer with TCF3/isoform E12. In terms of tissue distribution, germ cells. Expressed in the fetal ovary, but not by a range of other tissues. Expression increases across mid-gestation, rising some 40-fold by the time of primordial follicle formation.

It is found in the nucleus. Its function is as follows. Germline specific transcription factor implicated in postnatal oocyte-specific gene expression. Plays a key regulatory role in the expression of multiple oocyte-specific genes, including those that initiate folliculogenesis and those that encode the zona pellucida (ZP1, ZP2 and ZP3) required for fertilization and early embryonic survival. Essential for oocytes to survive and form primordial follicles. The persistence of FIGLA in adult females suggests that it may regulate additional pathways that are essential for normal ovarian development. Binds to the E-box (5'-CANNTG-3') of the ZPs (ZP1, ZP2, ZP3) promoters. This chain is Factor in the germline alpha (FIGLA), found in Homo sapiens (Human).